The primary structure comprises 395 residues: Cytoplasmic 60S subunit biogenesis factor REI1 homolog 2 (395 aa).

4 consecutive C2H2-type zinc fingers follow at residues 4–28 (LACN…SEWH), 68–92 (YSCG…SKSH), 171–194 (ACCL…HKFH), and 222–249 (FVCL…AKGH).

The protein belongs to the REI1 family. Can form homodimer. Interacts with RLP24, RLP24A, RPL24B, EBP1 and JJJ1.

It is found in the cytoplasm. Functionally, pre-60S-associated factor involved in the cytoplasmic maturation of the 60S subunit. Involved in the dissociation and recycling of other late pre-60S factors before newly synthesized large ribosomal subunits enter translation. Can complement the growth defect of a yeast mutant lacking REI1. Required for leaf growth under cold temperature conditions. In Arabidopsis thaliana (Mouse-ear cress), this protein is Cytoplasmic 60S subunit biogenesis factor REI1 homolog 2.